Here is a 959-residue protein sequence, read N- to C-terminus: Vacuolar membrane protease (959 aa).

Residues 1–13 (MARLNPLSFTPGP) lie on the Cytoplasmic side of the membrane. The chain crosses the membrane as a helical span at residues 14–34 (VIFFTCAVYIALFAALLTVHL). Residues 35–378 (RVPDYPSKTP…KVFVVFQLHT (344 aa)) lie on the Vacuolar side of the membrane. Residues asparagine 48, asparagine 102, and asparagine 105 are each glycosylated (N-linked (GlcNAc...) asparagine). A disordered region spans residues 128–149 (GSEDDEPYHSPQSSPPGERRLD). Residues histidine 158 and aspartate 170 each coordinate Zn(2+). The Proton acceptor role is filled by glutamate 204. Zn(2+) is bound by residues glutamate 205, glutamate 230, and histidine 303. The chain crosses the membrane as a helical span at residues 379–399 (MFALCVTLLVVAPLFLIGLTF). Topologically, residues 400–432 (GLSKADKNYLFARKAYMYSSDDDHPVHLYGWRG) are cytoplasmic. Residues 433 to 453 (FFRFPIVFSIATAVVVGLAYL) traverse the membrane as a helical segment. At 454-463 (MVRLNPLILY) the chain is on the vacuolar side. The helical transmembrane segment at 464–484 (SSPYAVWSMMLSAWFSVAWFF) threads the bilayer. Over 485-498 (SRGASAMRPSALQR) the chain is Cytoplasmic. The chain crosses the membrane as a helical span at residues 499–519 (MYALIWLFAGSFALLAFVTVL). Topologically, residues 520–524 (SNNYQ) are vacuolar. Residues 525-545 (VAGGYFALFYFAGIFLALVLS) form a helical membrane-spanning segment. The Cytoplasmic segment spans residues 546–645 (YLELFFAPTK…YPGEQDWSGK (100 aa)). Disordered regions lie at residues 566–594 (DEPV…DATE) and 606–635 (FARH…LKQP). A compositionally biased stretch (basic and acidic residues) spans 612-626 (RRDSIDDENGNRDEE). The helical transmembrane segment at 646-666 (LPGWLWLLQLLLVAPIVVILV) threads the bilayer. The Vacuolar segment spans residues 667-688 (GQIALLLTSALHQTPADGNSSL). The N-linked (GlcNAc...) asparagine glycan is linked to asparagine 685. A helical membrane pass occupies residues 689-709 (FVYLAFALLTTLLLAPIGPFI). Residues 710–716 (HRFTWHV) lie on the Cytoplasmic side of the membrane. The helical transmembrane segment at 717-737 (PTFVFLVCVATVIYNLVAFPF) threads the bilayer. The Vacuolar portion of the chain corresponds to 738-959 (SREHRLKVYF…LVEGFKYFQV (222 aa)). N-linked (GlcNAc...) asparagine glycans are attached at residues asparagine 785, asparagine 818, asparagine 834, asparagine 864, and asparagine 899.

This sequence belongs to the peptidase M28 family. Requires Zn(2+) as cofactor.

It localises to the vacuole membrane. In terms of biological role, may be involved in vacuolar sorting and osmoregulation. The sequence is that of Vacuolar membrane protease from Phaeosphaeria nodorum (strain SN15 / ATCC MYA-4574 / FGSC 10173) (Glume blotch fungus).